We begin with the raw amino-acid sequence, 1071 residues long: Carbamoyl phosphate synthase pyrimidine-specific large chain (1071 aa).

The tract at residues 1–401 (MPKRVDINKI…SLLKAVRSLE (401 aa)) is carboxyphosphate synthetic domain. ATP is bound by residues Arg-129, Arg-169, Gly-175, Gly-176, Lys-208, Ile-210, Glu-215, Gly-241, Ile-242, His-243, Gln-284, and Glu-298. In terms of domain architecture, ATP-grasp 1 spans 133–327 (RTLMNELNEP…IAKLAAKIAV (195 aa)). Residues Gln-284, Glu-298, and Asn-300 each contribute to the Mg(2+) site. Gln-284, Glu-298, and Asn-300 together coordinate Mn(2+). Positions 402-546 (ADVYHLELKD…YSTYEEENES (145 aa)) are oligomerization domain. A carbamoyl phosphate synthetic domain region spans residues 547 to 929 (VVTDKKSVMV…ALYKALIASG (383 aa)). The ATP-grasp 2 domain maps to 671-861 (EQALGELGVP…MANLATKIIL (191 aa)). The ATP site is built by Arg-707, Arg-746, Leu-748, Glu-752, Gly-777, Val-778, His-779, Ser-780, Gln-820, and Glu-832. The Mg(2+) site is built by Gln-820, Glu-832, and Asn-834. Residues Gln-820, Glu-832, and Asn-834 each coordinate Mn(2+). One can recognise an MGS-like domain in the interval 930–1071 (IQIPNYGSVL…NTNQEAAVTI (142 aa)). The allosteric domain stretch occupies residues 930–1071 (IQIPNYGSVL…NTNQEAAVTI (142 aa)).

The protein belongs to the CarB family. As to quaternary structure, composed of two chains; the small (or glutamine) chain promotes the hydrolysis of glutamine to ammonia, which is used by the large (or ammonia) chain to synthesize carbamoyl phosphate. Tetramer of heterodimers (alpha,beta)4. Interacts with BrxC. The cofactor is Mg(2+). Requires Mn(2+) as cofactor.

The enzyme catalyses hydrogencarbonate + L-glutamine + 2 ATP + H2O = carbamoyl phosphate + L-glutamate + 2 ADP + phosphate + 2 H(+). It catalyses the reaction hydrogencarbonate + NH4(+) + 2 ATP = carbamoyl phosphate + 2 ADP + phosphate + 2 H(+). It functions in the pathway amino-acid biosynthesis; L-arginine biosynthesis; carbamoyl phosphate from bicarbonate: step 1/1. Its pathway is pyrimidine metabolism; UMP biosynthesis via de novo pathway; (S)-dihydroorotate from bicarbonate: step 1/3. Its function is as follows. Small subunit of the glutamine-dependent carbamoyl phosphate synthetase (CPSase). CPSase catalyzes the formation of carbamoyl phosphate from the ammonia moiety of glutamine, carbonate, and phosphate donated by ATP, constituting the first step of the biosynthetic pathway leading to pyrimidine nucleotides. The large subunit (synthetase) binds the substrates ammonia (free or transferred from glutamine from the small subunit), hydrogencarbonate and ATP and carries out an ATP-coupled ligase reaction, activating hydrogencarbonate by forming carboxy phosphate which reacts with ammonia to form carbamoyl phosphate. The chain is Carbamoyl phosphate synthase pyrimidine-specific large chain (pyrAB) from Bacillus subtilis (strain 168).